The chain runs to 99 residues: Nucleoid-associated protein MGAS2096_Spy1605 (99 aa).

This sequence belongs to the YbaB/EbfC family. In terms of assembly, homodimer.

It localises to the cytoplasm. The protein resides in the nucleoid. In terms of biological role, binds to DNA and alters its conformation. May be involved in regulation of gene expression, nucleoid organization and DNA protection. The sequence is that of Nucleoid-associated protein MGAS2096_Spy1605 from Streptococcus pyogenes serotype M12 (strain MGAS2096).